We begin with the raw amino-acid sequence, 190 residues long: Ribosome hibernation promotion factor (190 aa).

This sequence belongs to the HPF/YfiA ribosome-associated protein family. Long HPF subfamily. As to quaternary structure, interacts with 100S ribosomes.

The protein localises to the cytoplasm. In terms of biological role, required for dimerization of active 70S ribosomes into 100S ribosomes in stationary phase; 100S ribosomes are translationally inactive and sometimes present during exponential growth. The protein is Ribosome hibernation promotion factor of Staphylococcus aureus (strain COL).